Consider the following 120-residue polypeptide: Ribosome-binding factor A (120 aa).

Belongs to the RbfA family. Monomer. Binds 30S ribosomal subunits, but not 50S ribosomal subunits or 70S ribosomes.

It localises to the cytoplasm. In terms of biological role, one of several proteins that assist in the late maturation steps of the functional core of the 30S ribosomal subunit. Associates with free 30S ribosomal subunits (but not with 30S subunits that are part of 70S ribosomes or polysomes). Required for efficient processing of 16S rRNA. May interact with the 5'-terminal helix region of 16S rRNA. The chain is Ribosome-binding factor A from Lactobacillus delbrueckii subsp. bulgaricus (strain ATCC 11842 / DSM 20081 / BCRC 10696 / JCM 1002 / NBRC 13953 / NCIMB 11778 / NCTC 12712 / WDCM 00102 / Lb 14).